The chain runs to 388 residues: Succinate--CoA ligase [ADP-forming] subunit beta (388 aa).

The region spanning 9 to 244 (KQLFSRYGLP…PSQEDPREAQ (236 aa)) is the ATP-grasp domain. ATP contacts are provided by residues lysine 46, 53 to 55 (GRG), glutamate 99, threonine 102, and glutamate 107. Mg(2+) is bound by residues asparagine 199 and aspartate 213. Substrate contacts are provided by residues asparagine 264 and 321–323 (GIV).

Belongs to the succinate/malate CoA ligase beta subunit family. In terms of assembly, heterotetramer of two alpha and two beta subunits. Mg(2+) is required as a cofactor.

It catalyses the reaction succinate + ATP + CoA = succinyl-CoA + ADP + phosphate. It carries out the reaction GTP + succinate + CoA = succinyl-CoA + GDP + phosphate. Its pathway is carbohydrate metabolism; tricarboxylic acid cycle; succinate from succinyl-CoA (ligase route): step 1/1. Its function is as follows. Succinyl-CoA synthetase functions in the citric acid cycle (TCA), coupling the hydrolysis of succinyl-CoA to the synthesis of either ATP or GTP and thus represents the only step of substrate-level phosphorylation in the TCA. The beta subunit provides nucleotide specificity of the enzyme and binds the substrate succinate, while the binding sites for coenzyme A and phosphate are found in the alpha subunit. The chain is Succinate--CoA ligase [ADP-forming] subunit beta from Proteus mirabilis (strain HI4320).